Reading from the N-terminus, the 307-residue chain is tRNA dimethylallyltransferase 2 (307 aa).

ATP is bound at residue 11–18 (GPTASGKT). Residue 13 to 18 (TASGKT) participates in substrate binding. Positions 36–39 (DSRQ) are interaction with substrate tRNA.

This sequence belongs to the IPP transferase family. Monomer. Mg(2+) serves as cofactor.

The catalysed reaction is adenosine(37) in tRNA + dimethylallyl diphosphate = N(6)-dimethylallyladenosine(37) in tRNA + diphosphate. In terms of biological role, catalyzes the transfer of a dimethylallyl group onto the adenine at position 37 in tRNAs that read codons beginning with uridine, leading to the formation of N6-(dimethylallyl)adenosine (i(6)A). The chain is tRNA dimethylallyltransferase 2 from Phocaeicola vulgatus (strain ATCC 8482 / DSM 1447 / JCM 5826 / CCUG 4940 / NBRC 14291 / NCTC 11154) (Bacteroides vulgatus).